The chain runs to 341 residues: Short chain dehydrogenase virL (341 aa).

NADP(+) is bound by residues leucine 49, lysine 74, aspartate 97, asparagine 123, tyrosine 210, and lysine 214. The Proton donor role is filled by tyrosine 210. Lysine 214 acts as the Lowers pKa of active site Tyr in catalysis.

It belongs to the short-chain dehydrogenases/reductases (SDR) family.

It participates in secondary metabolite biosynthesis. In terms of biological role, short chain dehydrogenase; part of the gene cluster that mediates the biosynthesis of virensols and trichoxide, fungal natural products that contain or are derived from a salicylaldehyde core. The pathway begins with the synthesis of the reduced chain in virensol C by the highly reducing polyketide synthase virA via condensation of one acetate and 8 malonate units. VirA has interesting programming rules since the first 2 ketides are fully reduced, the 3 following ketides undergo beta-dehydration, and the last 3 ketides are only reduced to beta-hydroxys to yield the trihydroxy portion. The production of aldehyde virensol C by virA alone is surprising, since virA does not contain a reductase (R) domain that is typically associated with reductive product release in HRPKS. The cupin-domain enzyme virC is involved in enhancing virA product turnover. The short-chain dehydrogenase virB then oxidizes the C-7 alcohol of virensol C to a ketone, yielding virensol D. Virensol D is further transformed to salicylaldehyde 5-deoxyaurocitrin by the short-chain dehydrogenase virD. VirD catalyzes the dehydrogenation of C-3 to form the beta-ketone aldehyde, which is followed by the generation of the nucleophilic C-2 that is required for the intramolecular aldol condensation between C-2 and C-7, itself followed by dehydration and aromatization which leads to salicylaldehyde 5-deoxyaurocitrin. While the dehydrogenation of virensol D is definitely catalyzed by virD, the aldol condensation and dehydration may be uncatalyzed or assisted by virD. The short chain dehydrogenase virG then converts salicylaldehyde 5-deoxyaurocitrin into virensol B which is further hydroxylated by the cytochrome P450 monooxygenase virE to yield the hydroquinone virensol A. VirI then may oxidize virensol A to form the quinone, while virH performs the epoxidation. Finally, the two remaining short-chain dehydrogenases, virK and virL, are probably responsible for reducing the ketones to the corresponding alcohols to furnish the epoxycyclohexanol structure in trichoxide. The polypeptide is Short chain dehydrogenase virL (Hypocrea virens (strain Gv29-8 / FGSC 10586) (Gliocladium virens)).